We begin with the raw amino-acid sequence, 182 residues long: Isopentenyl-diphosphate Delta-isomerase (182 aa).

Mn(2+) is bound by residues H25 and H32. Positions 30-164 (RLHLAFSSWL…PWAFSPWMVM (135 aa)) constitute a Nudix hydrolase domain. The active site involves C67. Residue H69 participates in Mn(2+) binding. Residue E87 participates in Mg(2+) binding. Residues E114 and E116 each contribute to the Mn(2+) site. E116 is a catalytic residue.

Belongs to the IPP isomerase type 1 family. In terms of assembly, homodimer. Mg(2+) serves as cofactor. It depends on Mn(2+) as a cofactor.

It is found in the cytoplasm. The enzyme catalyses isopentenyl diphosphate = dimethylallyl diphosphate. It functions in the pathway isoprenoid biosynthesis; dimethylallyl diphosphate biosynthesis; dimethylallyl diphosphate from isopentenyl diphosphate: step 1/1. Its function is as follows. Catalyzes the 1,3-allylic rearrangement of the homoallylic substrate isopentenyl (IPP) to its highly electrophilic allylic isomer, dimethylallyl diphosphate (DMAPP). This Escherichia coli O139:H28 (strain E24377A / ETEC) protein is Isopentenyl-diphosphate Delta-isomerase.